The primary structure comprises 180 residues: Cell division protein ZapC (180 aa).

It belongs to the ZapC family. In terms of assembly, interacts directly with FtsZ.

Its subcellular location is the cytoplasm. Its function is as follows. Contributes to the efficiency of the cell division process by stabilizing the polymeric form of the cell division protein FtsZ. Acts by promoting interactions between FtsZ protofilaments and suppressing the GTPase activity of FtsZ. The sequence is that of Cell division protein ZapC from Vibrio cholerae serotype O1 (strain ATCC 39315 / El Tor Inaba N16961).